A 738-amino-acid chain; its full sequence is Ethylene receptor (738 aa).

The next 3 helical transmembrane spans lie at 22–42 (ISDFFIAVAYFSIPIELVYFV), 53–73 (VLVQFGAFIVLCGATHLINLW), and 91–111 (VLTAVVSCATALMLVHIIPDL). Cu cation is bound by residues Cys-64 and His-68. Positions 157–305 (DRHTILKTTL…VVADQVAVAL (149 aa)) constitute a GAF domain. Residues 348–585 (VMNHEMRTPM…TAIFIVKLGI (238 aa)) enclose the Histidine kinase domain. His-351 is subject to Phosphohistidine; by autocatalysis. One can recognise a Response regulatory domain in the interval 613-730 (KVLIMDDNGF…KMRSVLSELL (118 aa)). Asp-661 is subject to 4-aspartylphosphate.

Belongs to the ethylene receptor family. In terms of assembly, homodimer; disulfide-linked. Cu cation is required as a cofactor. Activation probably requires a transfer of a phosphate group between a His in the transmitter domain and an Asp of the receiver domain.

The protein resides in the endoplasmic reticulum membrane. It carries out the reaction ATP + protein L-histidine = ADP + protein N-phospho-L-histidine.. Functionally, may act early in the ethylene signal transduction pathway, possibly as an ethylene receptor, or as a regulator of the pathway. This Nicotiana tabacum (Common tobacco) protein is Ethylene receptor (ETR1).